We begin with the raw amino-acid sequence, 931 residues long: Isoleucine--tRNA ligase (931 aa).

Residues 57-67 (PFANGNIHMGH) carry the 'HIGH' region motif. Glutamate 556 is a binding site for L-isoleucyl-5'-AMP. The 'KMSKS' region motif lies at 597–601 (KMSKS). Lysine 600 contacts ATP. The Zn(2+) site is built by cysteine 890, cysteine 893, cysteine 910, and cysteine 913.

The protein belongs to the class-I aminoacyl-tRNA synthetase family. IleS type 1 subfamily. In terms of assembly, monomer. Requires Zn(2+) as cofactor.

The protein localises to the cytoplasm. The catalysed reaction is tRNA(Ile) + L-isoleucine + ATP = L-isoleucyl-tRNA(Ile) + AMP + diphosphate. Its function is as follows. Catalyzes the attachment of isoleucine to tRNA(Ile). As IleRS can inadvertently accommodate and process structurally similar amino acids such as valine, to avoid such errors it has two additional distinct tRNA(Ile)-dependent editing activities. One activity is designated as 'pretransfer' editing and involves the hydrolysis of activated Val-AMP. The other activity is designated 'posttransfer' editing and involves deacylation of mischarged Val-tRNA(Ile). The chain is Isoleucine--tRNA ligase from Lactobacillus delbrueckii subsp. bulgaricus (strain ATCC BAA-365 / Lb-18).